The following is a 192-amino-acid chain: Ornithine lipid N-methyltransferase (192 aa).

It belongs to the methyltransferase superfamily.

The enzyme catalyses an N(2)-[(3R)-3-(2-saturated-acyloxy)acyl]-L-ornithine lipid + 3 S-adenosyl-L-methionine = an N,N,N-trimethylornithine lipid + 3 S-adenosyl-L-homocysteine + 3 H(+). In terms of biological role, catalyzes the 3-fold methylation of ornithine lipids. Forms ornithine lipids that are mono-, di-, and trimethylated on the delta-nitrogen of the ornithine head group. The sequence is that of Ornithine lipid N-methyltransferase from Singulisphaera acidiphila (strain ATCC BAA-1392 / DSM 18658 / VKM B-2454 / MOB10).